The chain runs to 66 residues: COP-associated protein (66 aa).

One can recognise an HMA domain in the interval 1–66 (MKVTFQVPSI…ALLDAGQEVV (66 aa)). Cu cation is bound by residues Cys12 and Cys15.

Part of a cation-transporting system which is associated with copper export out of the H.pylori cells. The polypeptide is COP-associated protein (copP) (Helicobacter pylori (strain J99 / ATCC 700824) (Campylobacter pylori J99)).